Consider the following 284-residue polypeptide: Diaminopimelate epimerase (284 aa).

Residues Asn21, Gln54, and Asn74 each coordinate substrate. Cys83 acts as the Proton donor in catalysis. Substrate is bound by residues 84–85 (GN), Asn167, Asn200, and 218–219 (ER). The active-site Proton acceptor is the Cys227. 228–229 (GS) serves as a coordination point for substrate.

This sequence belongs to the diaminopimelate epimerase family. In terms of assembly, homodimer.

The protein localises to the cytoplasm. It catalyses the reaction (2S,6S)-2,6-diaminopimelate = meso-2,6-diaminopimelate. It functions in the pathway amino-acid biosynthesis; L-lysine biosynthesis via DAP pathway; DL-2,6-diaminopimelate from LL-2,6-diaminopimelate: step 1/1. Functionally, catalyzes the stereoinversion of LL-2,6-diaminopimelate (L,L-DAP) to meso-diaminopimelate (meso-DAP), a precursor of L-lysine and an essential component of the bacterial peptidoglycan. The protein is Diaminopimelate epimerase of Buchnera aphidicola subsp. Acyrthosiphon pisum (strain APS) (Acyrthosiphon pisum symbiotic bacterium).